The chain runs to 120 residues: Chaperonin GroEL (120 aa).

23–27 (DGTTT) serves as a coordination point for ATP.

It belongs to the chaperonin (HSP60) family. As to quaternary structure, forms a cylinder of 14 subunits composed of two heptameric rings stacked back-to-back. Interacts with the co-chaperonin GroES.

It is found in the cytoplasm. The enzyme catalyses ATP + H2O + a folded polypeptide = ADP + phosphate + an unfolded polypeptide.. Its function is as follows. Together with its co-chaperonin GroES, plays an essential role in assisting protein folding. The GroEL-GroES system forms a nano-cage that allows encapsulation of the non-native substrate proteins and provides a physical environment optimized to promote and accelerate protein folding. This is Chaperonin GroEL from Mycobacterium xenopi.